We begin with the raw amino-acid sequence, 755 residues long: 3-isopropylmalate dehydratase (755 aa).

[4Fe-4S] cluster is bound by residues Cys-353, Cys-413, and Cys-416. Disordered regions lie at residues 427–446 (GERC…GAGG), 471–493 (LTPA…ELEP), and 510–529 (DAPA…AAGM). Residues 510–528 (DAPATGASPPSPAPSDAAG) are compositionally biased toward low complexity.

Belongs to the aconitase/IPM isomerase family. In terms of assembly, monomer. It depends on [4Fe-4S] cluster as a cofactor.

It carries out the reaction (2R,3S)-3-isopropylmalate = (2S)-2-isopropylmalate. The protein operates within amino-acid biosynthesis; L-leucine biosynthesis; L-leucine from 3-methyl-2-oxobutanoate: step 2/4. In terms of biological role, catalyzes the isomerization between 2-isopropylmalate and 3-isopropylmalate, via the formation of 2-isopropylmaleate. The polypeptide is 3-isopropylmalate dehydratase (LEUA) (Rhizomucor pusillus).